Here is a 213-residue protein sequence, read N- to C-terminus: Pyrrolidone-carboxylate peptidase (213 aa).

Residues Glu78, Cys141, and His165 contribute to the active site.

Belongs to the peptidase C15 family. Homotetramer.

Its subcellular location is the cytoplasm. It catalyses the reaction Release of an N-terminal pyroglutamyl group from a polypeptide, the second amino acid generally not being Pro.. Its function is as follows. Removes 5-oxoproline from various penultimate amino acid residues except L-proline. The sequence is that of Pyrrolidone-carboxylate peptidase from Staphylococcus saprophyticus subsp. saprophyticus (strain ATCC 15305 / DSM 20229 / NCIMB 8711 / NCTC 7292 / S-41).